A 476-amino-acid polypeptide reads, in one-letter code: MWTGLGPAVTLALVLVVAWATELKPTAPPIFTGRPFVVAWDVPTQDCGPRHKMPLDPKDMKAFDVQASPNEGFVNQNITIFYRDRLGMYPHFNSVGRSVHGGVPQNGSLWVHLEMLKGHVEHYIRTQEPAGLAVIDWEDWRPVWVRNWQDKDVYRRLSRQLVASHHPDWPPERIVKEAQYEFEFAARQFMLETLRFVKAFRPRHLWGFYLFPDCYNHDYVQNWETYTGRCPDVEVSRNDQLSWLWAESTALFPSVYLEETLASSTHGRNFVSFRVQEALRVADVHHANHALPVYVFTRPTYSRGLTGLSEMDLISTIGESAALGAAGVILWGDAGFTTSNETCRRLKDYLTRSLVPYVVNVSWAAQYCSWAQCHGHGRCVRRDPNAHTFLHLSASSFRLVPSHAPDEPRLRPEGELSWADRNHLQTHFRCQCYLGWGGEQCQWDRRRAAGGASGAWAGSHLTGLLAVAVLAFTWTS.

The N-terminal stretch at 1 to 20 (MWTGLGPAVTLALVLVVAWA) is a signal peptide. 2 cysteine pairs are disulfide-bonded: Cys47–Cys343 and Cys214–Cys230. 2 N-linked (GlcNAc...) asparagine glycosylation sites follow: Asn77 and Asn106. Glu138 functions as the Proton donor in the catalytic mechanism. N-linked (GlcNAc...) asparagine glycosylation is found at Asn340 and Asn360. In terms of domain architecture, EGF-like spans 364 to 442 (AAQYCSWAQC…YLGWGGEQCQ (79 aa)). 3 disulfides stabilise this stretch: Cys368–Cys379, Cys373–Cys430, and Cys432–Cys441. The GPI-anchor amidated glycine moiety is linked to residue Gly451. Positions 452–476 (ASGAWAGSHLTGLLAVAVLAFTWTS) are cleaved as a propeptide — removed in mature form.

The protein belongs to the glycosyl hydrolase 56 family. In terms of assembly, interacts with MST1R. (Microbial infection) Interacts with Jaagsiekte sheep retrovirus (JSRV) envelope proteins.

It localises to the cell membrane. The catalysed reaction is Random hydrolysis of (1-&gt;4)-linkages between N-acetyl-beta-D-glucosamine and D-glucuronate residues in hyaluronate.. Functionally, catalyzes hyaluronan degradation into small fragments that are endocytosed and degraded in lysosomes by HYAL1 and exoglycosidases. Essential for the breakdown of extracellular matrix hyaluronan. The sequence is that of Hyaluronidase-2 (HYAL2) from Ovis aries (Sheep).